We begin with the raw amino-acid sequence, 242 residues long: Small ribosomal subunit protein uS2 (242 aa).

This sequence belongs to the universal ribosomal protein uS2 family.

This Photobacterium profundum (strain SS9) protein is Small ribosomal subunit protein uS2.